A 194-amino-acid polypeptide reads, in one-letter code: ATP-dependent Clp protease proteolytic subunit (194 aa).

Ser99 (nucleophile) is an active-site residue. Residue His124 is part of the active site.

It belongs to the peptidase S14 family. Fourteen ClpP subunits assemble into 2 heptameric rings which stack back to back to give a disk-like structure with a central cavity, resembling the structure of eukaryotic proteasomes.

The protein localises to the cytoplasm. The enzyme catalyses Hydrolysis of proteins to small peptides in the presence of ATP and magnesium. alpha-casein is the usual test substrate. In the absence of ATP, only oligopeptides shorter than five residues are hydrolyzed (such as succinyl-Leu-Tyr-|-NHMec, and Leu-Tyr-Leu-|-Tyr-Trp, in which cleavage of the -Tyr-|-Leu- and -Tyr-|-Trp bonds also occurs).. Cleaves peptides in various proteins in a process that requires ATP hydrolysis. Has a chymotrypsin-like activity. Plays a major role in the degradation of misfolded proteins. This chain is ATP-dependent Clp protease proteolytic subunit, found in Clostridium perfringens (strain ATCC 13124 / DSM 756 / JCM 1290 / NCIMB 6125 / NCTC 8237 / Type A).